A 183-amino-acid polypeptide reads, in one-letter code: Outer membrane protein H.8 (183 aa).

Residues 1–17 (MKAYLALISAAVIGLAA) form the signal peptide. C18 is lipidated: N-palmitoyl cysteine. A lipid anchor (S-diacylglycerol cysteine) is attached at C18. The disordered stretch occupies residues 27–51 (AEATPAAEAPASEAPAAEAAPADAA). The Plastocyanin-like domain occupies 57 to 183 (GNCAATVESN…LMNGKVTLVD (127 aa)). 4 residues coordinate Cu cation: H102, C166, H171, and M175.

The cofactor is Cu cation.

The protein resides in the cell outer membrane. This chain is Outer membrane protein H.8, found in Neisseria meningitidis serogroup C / serotype 2a (strain ATCC 700532 / DSM 15464 / FAM18).